The sequence spans 111 residues: Large ribosomal subunit protein uL23 (111 aa).

It belongs to the universal ribosomal protein uL23 family. Part of the 50S ribosomal subunit. Contacts protein L29, and trigger factor when it is bound to the ribosome.

One of the early assembly proteins it binds 23S rRNA. One of the proteins that surrounds the polypeptide exit tunnel on the outside of the ribosome. Forms the main docking site for trigger factor binding to the ribosome. The sequence is that of Large ribosomal subunit protein uL23 from Chlamydia trachomatis serovar L2 (strain ATCC VR-902B / DSM 19102 / 434/Bu).